The chain runs to 139 residues: Actin-depolymerizing factor 9 (139 aa).

Residues 7–139 (GLAVNDECKF…SLDIIRARAH (133 aa)) form the ADF-H domain.

This sequence belongs to the actin-binding proteins ADF family.

Actin-depolymerizing protein. Severs actin filaments (F-actin) and binds to actin monomers. In Oryza sativa subsp. japonica (Rice), this protein is Actin-depolymerizing factor 9 (ADF9).